The following is a 419-amino-acid chain: D-inositol 3-phosphate glycosyltransferase (419 aa).

Histidine 9 is a 1D-myo-inositol 3-phosphate binding site. UDP-N-acetyl-alpha-D-glucosamine is bound by residues 15–16 (QP) and glycine 23. 1D-myo-inositol 3-phosphate is bound by residues 20–25 (DAGGMN), lysine 78, tyrosine 110, threonine 134, and arginine 154. The UDP-N-acetyl-alpha-D-glucosamine site is built by arginine 231, lysine 236, and arginine 295. Positions 304, 305, and 307 each coordinate Mg(2+). Residues glutamate 317 and glutamate 325 each coordinate UDP-N-acetyl-alpha-D-glucosamine. Threonine 331 is a Mg(2+) binding site.

This sequence belongs to the glycosyltransferase group 1 family. MshA subfamily. Homodimer.

It catalyses the reaction 1D-myo-inositol 3-phosphate + UDP-N-acetyl-alpha-D-glucosamine = 1D-myo-inositol 2-acetamido-2-deoxy-alpha-D-glucopyranoside 3-phosphate + UDP + H(+). Its function is as follows. Catalyzes the transfer of a N-acetyl-glucosamine moiety to 1D-myo-inositol 3-phosphate to produce 1D-myo-inositol 2-acetamido-2-deoxy-glucopyranoside 3-phosphate in the mycothiol biosynthesis pathway. The protein is D-inositol 3-phosphate glycosyltransferase of Corynebacterium jeikeium (strain K411).